The chain runs to 208 residues: Protein GrpE (208 aa).

The segment covering 1 to 25 (MVDNKDFNEELKESIQEELDNETKS) has biased composition (basic and acidic residues). The tract at residues 1 to 38 (MVDNKDFNEELKESIQEELDNETKSENPNIDEEVEEVS) is disordered. Residues 29–38 (NIDEEVEEVS) show a composition bias toward acidic residues.

Belongs to the GrpE family. In terms of assembly, homodimer.

The protein resides in the cytoplasm. Its function is as follows. Participates actively in the response to hyperosmotic and heat shock by preventing the aggregation of stress-denatured proteins, in association with DnaK and GrpE. It is the nucleotide exchange factor for DnaK and may function as a thermosensor. Unfolded proteins bind initially to DnaJ; upon interaction with the DnaJ-bound protein, DnaK hydrolyzes its bound ATP, resulting in the formation of a stable complex. GrpE releases ADP from DnaK; ATP binding to DnaK triggers the release of the substrate protein, thus completing the reaction cycle. Several rounds of ATP-dependent interactions between DnaJ, DnaK and GrpE are required for fully efficient folding. This is Protein GrpE from Clostridium perfringens (strain SM101 / Type A).